Reading from the N-terminus, the 260-residue chain is ICLGGLGKVTLAPAPGQTNWPFWLTVTSNDPVVACLASQYAGWSLSHEKFFALGSGPGRSLARKEPLFQELPYEDSASRATIVLEAGAPPPEPVVAKVAESCGVSPDKLAFIYAPTQSLAGSVQVVGRVLEVALHKAHELKFPLEHIVDGIATAPLSPPHPDFVTAMGRTNDAIIYSGRAHLFVRGSAEAAKALAEKLPSSNSRDYGRPFAEIFKAYKGEFYKIDPSLFSPAEAIVTAVETGETFRAGAIDEKLLDASFG.

The protein belongs to the MCH family.

The protein localises to the cytoplasm. It carries out the reaction 5,10-methenyl-5,6,7,8-tetrahydromethanopterin + H2O = N(5)-formyl-5,6,7,8-tetrahydromethanopterin + H(+). It functions in the pathway one-carbon metabolism; formaldehyde degradation; formate from formaldehyde (H(4)MPT route): step 3/5. In terms of biological role, catalyzes the hydrolysis of methenyl-H(4)MPT(+) to 5-formyl-H(4)MPT. The chain is Methenyltetrahydromethanopterin cyclohydrolase (mch) from Methylosinus trichosporium.